The following is a 107-amino-acid chain: IQ domain-containing protein F6 (107 aa).

Residues 42-71 (QEWAVVKVQAQVRMWQARRRFLQARQAACI) form the IQ domain.

The polypeptide is IQ domain-containing protein F6 (IQCF6) (Homo sapiens (Human)).